A 351-amino-acid polypeptide reads, in one-letter code: C-X-C chemokine receptor type 1 (351 aa).

Topologically, residues 1–44 are extracellular; sequence MAEAEYFIWTNPEGDFEKEFGNITGMLPTGDYFIPCKRVPITNR. An N-linked (GlcNAc...) asparagine glycan is attached at N22. A helical transmembrane segment spans residues 45 to 71; the sequence is QALVVFYALVSLLSLLGNSLVMLVILY. The Cytoplasmic portion of the chain corresponds to 72–80; that stretch reads RRRTRSVMD. Residues 81 to 101 traverse the membrane as a helical segment; the sequence is VYVLNLAIADLLFSLTLPFLA. At 102-116 the chain is on the extracellular side; sequence VSKLKGWIFGTPLCK. A disulfide bond links C115 and C192. Residues 117–138 traverse the membrane as a helical segment; the sequence is MVSLLKEFNFFSGILLLACISV. Residues 139 to 159 are Cytoplasmic-facing; the sequence is DRYLAIVHATRTLARKRYLVK. A helical membrane pass occupies residues 160–179; that stretch reads FVCVGIWGLSLILSLPFAIF. Over 180 to 204 the chain is Extracellular; sequence RQAYKPFRSGTVCYEVLGEATTDFR. The helical transmembrane segment at 205 to 225 threads the bilayer; it reads MTLRGLSHIFGFLLPLLTMLV. Residues 226 to 247 lie on the Cytoplasmic side of the membrane; it reads CYGLTLRMLFKTHMRQKHRAMG. A helical transmembrane segment spans residues 248-269; it reads VIFAVVLVFLLCCLPYNLVLLS. The Extracellular portion of the chain corresponds to 270–290; it reads DTLLGAHLIEDTCERRNDIDQ. A helical transmembrane segment spans residues 291-313; the sequence is ALYITEILGFSHSCLNPIIYAFV. At 314–351 the chain is on the cytoplasmic side; that stretch reads GQNFRHEFLKILANHGLVRKEVLTHRRVAFHTSLTAIY.

The protein belongs to the G-protein coupled receptor 1 family. In terms of assembly, interacts with IL8. Interacts with GNAI2.

The protein resides in the cell membrane. Functionally, receptor to interleukin-8, which is a powerful neutrophils chemotactic factor. Binding of IL-8 to the receptor causes activation of neutrophils. This response is mediated via a G-protein that activates a phosphatidylinositol-calcium second messenger system. This chain is C-X-C chemokine receptor type 1 (Cxcr1), found in Mus musculus (Mouse).